The chain runs to 275 residues: Formamidopyrimidine-DNA glycosylase (275 aa).

The active-site Schiff-base intermediate with DNA is proline 2. Catalysis depends on glutamate 3, which acts as the Proton donor. Residue lysine 58 is the Proton donor; for beta-elimination activity of the active site. The DNA site is built by histidine 89, arginine 108, and lysine 151. The FPG-type; degenerate zinc finger occupies 236–275 (KVYDRAGQPCERCPGPAACAGISRTVQSGRATYFCARTQK). The Proton donor; for delta-elimination activity role is filled by arginine 265.

The protein belongs to the FPG family. As to quaternary structure, monomer. It depends on Zn(2+) as a cofactor.

The catalysed reaction is Hydrolysis of DNA containing ring-opened 7-methylguanine residues, releasing 2,6-diamino-4-hydroxy-5-(N-methyl)formamidopyrimidine.. It catalyses the reaction 2'-deoxyribonucleotide-(2'-deoxyribose 5'-phosphate)-2'-deoxyribonucleotide-DNA = a 3'-end 2'-deoxyribonucleotide-(2,3-dehydro-2,3-deoxyribose 5'-phosphate)-DNA + a 5'-end 5'-phospho-2'-deoxyribonucleoside-DNA + H(+). Functionally, involved in base excision repair of DNA damaged by oxidation or by mutagenic agents. Acts as a DNA glycosylase that recognizes and removes damaged bases. Has a preference for oxidized purines, such as 7,8-dihydro-8-oxoguanine (8-oxoG). Has AP (apurinic/apyrimidinic) lyase activity and introduces nicks in the DNA strand. Cleaves the DNA backbone by beta-delta elimination to generate a single-strand break at the site of the removed base with both 3'- and 5'-phosphates. This Acidiphilium cryptum (strain JF-5) protein is Formamidopyrimidine-DNA glycosylase.